The sequence spans 402 residues: Multidrug resistance protein MdtH (402 aa).

Residues 1-12 lie on the Cytoplasmic side of the membrane; sequence MSRVSQARNLGK. Residues 13 to 33 form a helical membrane-spanning segment; the sequence is YFLLIDNMLVVLGFFVVFPLI. Residues 34-98 are Periplasmic-facing; that stretch reads SIRFVDQMGW…GFATMGIAHE (65 aa). A helical membrane pass occupies residues 99-116; sequence PWLLWFSCLLSGLGGTLF. The Cytoplasmic portion of the chain corresponds to 117–138; sequence DPPRSALVVKLIRPQQRGRFFS. Residues 139 to 159 form a helical membrane-spanning segment; the sequence is LLMMQDSASAVIGALLGSWLL. Over 160–164 the chain is Periplasmic; it reads QYDFR. A helical membrane pass occupies residues 165 to 185; it reads LVCATGAVLFVLCAAFNAWLL. Topologically, residues 186 to 213 are cytoplasmic; sequence PAWKLSTVRTPVREGMTRVMRDKRFVTY. A helical transmembrane segment spans residues 214 to 234; that stretch reads VLTLAGYYMLAVQVMLMLPIM. At 235 to 243 the chain is on the periplasmic side; sequence VNDVAGAPS. A helical transmembrane segment spans residues 244–264; the sequence is AVKWMYAIEACLSLTLLYPIA. The Cytoplasmic portion of the chain corresponds to 265-276; that stretch reads RWSEKHFRLEHR. A helical membrane pass occupies residues 277-297; the sequence is LMAGLLIMSLSMMPVGMVSGL. The Periplasmic portion of the chain corresponds to 298–299; that stretch reads QQ. The chain crosses the membrane as a helical span at residues 300-320; it reads LFTLICLFYIGSIIAEPARET. At 321 to 339 the chain is on the cytoplasmic side; that stretch reads LSASLADARARGSYMGFSR. Residues 340-360 form a helical membrane-spanning segment; sequence LGLAIGGAIGYIGGGWLFDLG. The Periplasmic portion of the chain corresponds to 361 to 367; it reads KSAHQPE. A helical transmembrane segment spans residues 368-388; it reads LPWMMLGIIGIFTFLALGWQF. Topologically, residues 389-402 are cytoplasmic; sequence SQKRAARRLLERDA.

This sequence belongs to the major facilitator superfamily. DHA1 family. MdtH (TC 2.A.1.2.21) subfamily.

The protein localises to the cell inner membrane. The protein is Multidrug resistance protein MdtH of Shigella flexneri.